Here is a 193-residue protein sequence, read N- to C-terminus: Protein GrpE (193 aa).

The disordered stretch occupies residues 1-40 (MTEENRPQPDQPELTVTSESSVQETGENKARTPEQEGEAM). The span at 14–25 (LTVTSESSVQET) shows a compositional bias: polar residues.

It belongs to the GrpE family. As to quaternary structure, homodimer.

It is found in the cytoplasm. Its function is as follows. Participates actively in the response to hyperosmotic and heat shock by preventing the aggregation of stress-denatured proteins, in association with DnaK and GrpE. It is the nucleotide exchange factor for DnaK and may function as a thermosensor. Unfolded proteins bind initially to DnaJ; upon interaction with the DnaJ-bound protein, DnaK hydrolyzes its bound ATP, resulting in the formation of a stable complex. GrpE releases ADP from DnaK; ATP binding to DnaK triggers the release of the substrate protein, thus completing the reaction cycle. Several rounds of ATP-dependent interactions between DnaJ, DnaK and GrpE are required for fully efficient folding. This chain is Protein GrpE, found in Nitrosospira multiformis (strain ATCC 25196 / NCIMB 11849 / C 71).